The chain runs to 295 residues: Glycine--tRNA ligase alpha subunit (295 aa).

The protein belongs to the class-II aminoacyl-tRNA synthetase family. As to quaternary structure, tetramer of two alpha and two beta subunits.

The protein resides in the cytoplasm. It catalyses the reaction tRNA(Gly) + glycine + ATP = glycyl-tRNA(Gly) + AMP + diphosphate. The sequence is that of Glycine--tRNA ligase alpha subunit from Rhodospirillum rubrum (strain ATCC 11170 / ATH 1.1.1 / DSM 467 / LMG 4362 / NCIMB 8255 / S1).